The chain runs to 186 residues: UPF0301 protein Daro_3893 (186 aa).

The protein belongs to the UPF0301 (AlgH) family.

In Dechloromonas aromatica (strain RCB), this protein is UPF0301 protein Daro_3893.